The primary structure comprises 332 residues: Junctional sarcoplasmic reticulum protein 1 (332 aa).

The segment at Met-1–Thr-80 is mediates interaction with CACNA1S. 2 disordered regions span residues Met-1 to Asp-125 and Ala-159 to Asp-332. A Phosphothreonine modification is found at Thr-51. Basic and acidic residues predominate over residues Gly-66–Gly-76. 2 stretches are compositionally biased toward pro residues: residues Gln-98–Thr-116 and Ala-177–Pro-197. Over residues Gly-221 to Ser-232 the composition is skewed to low complexity. 2 positions are modified to phosphoserine: Ser-223 and Ser-228. Basic and acidic residues-rich tracts occupy residues Gly-239–Lys-256 and Arg-283–Lys-307.

Interacts with CACNA1S, CACNB1 and calsequestrin. As to expression, specifically expressed in skeletal muscle. Detected in skeletal muscle and tongue (at protein level).

The protein resides in the sarcoplasmic reticulum membrane. Its subcellular location is the endoplasmic reticulum membrane. Its function is as follows. Involved in skeletal muscle excitation/contraction coupling (EC), probably acting as a regulator of the voltage-sensitive calcium channel CACNA1S. EC is a physiological process whereby an electrical signal (depolarization of the plasma membrane) is converted into a chemical signal, a calcium gradient, by the opening of ryanodine receptor calcium release channels. May regulate CACNA1S membrane targeting and activity. The sequence is that of Junctional sarcoplasmic reticulum protein 1 (Jsrp1) from Mus musculus (Mouse).